The sequence spans 299 residues: Hairy/enhancer-of-split related with YRPW motif protein 1 (299 aa).

Positions 1 to 53 (MKRAHPDYSSSDSELDETIEVEKESADENGNLSSALCSMSPTTSSQVLARKRR) are disordered. The span at 28-47 (ENGNLSSALCSMSPTTSSQV) shows a compositional bias: polar residues. Residues 48–117 (LARKRRRGII…GGKGYFDAHA (70 aa)) are transcriptional repression and interaction with NCOR1 and SIN3A. Residues 49 to 104 (ARKRRRGIIEKRRRDRINNSLSELRRLVPSAFEKQGSAKLEKAEILQMTVDHLKML) enclose the bHLH domain. Positions 122-158 (YRSLGFRECLAEVARYLSIIEGLDASDPLLVRLVSHL) constitute an Orange domain. The tract at residues 194-234 (LLLPQNGHGNAGTAASPTEPHHQGRLASAHPEAPALRAPPS) is disordered. The YRPW motif motif lies at 289 to 292 (YRPW).

The protein belongs to the HEY family. May self-associate. Interacts with HES1, NCOR1 and SIN3A. Interacts with GATA4, GATA6 and HDAC1 and HEYL. Interacts with CCDC89/BOIP. Expressed in somitic mesoderm, brain, central nervous system, kidney, heart, nasal epithelium, limbs, lung, muscle, ovary and testis.

The protein resides in the nucleus. Transcriptional repressor which binds preferentially to the canonical E box sequence 5'-CACGTG-3'. Downstream effector of Notch signaling required for cardiovascular development. Specifically required for the Notch-induced endocardial epithelial to mesenchymal transition, which is itself criticial for cardiac valve and septum development. May be required in conjunction with HEY2 to specify arterial cell fate or identity. Promotes maintenance of neuronal precursor cells and glial versus neuronal fate specification. Represses transcription by the cardiac transcriptional activators GATA4 and GATA6 and by the neuronal bHLH factors ASCL1/MASH1 and NEUROD4/MATH3. The polypeptide is Hairy/enhancer-of-split related with YRPW motif protein 1 (Hey1) (Mus musculus (Mouse)).